A 168-amino-acid polypeptide reads, in one-letter code: Pleiotrophin (168 aa).

The signal sequence occupies residues 1–32; sequence MQTPQFLQQRRKFAAAFLAFIFLLAVVDTAEA. Intrachain disulfides connect Cys-47-Cys-76, Cys-55-Cys-85, Cys-62-Cys-89, Cys-99-Cys-131, and Cys-109-Cys-141. Chondroitin sulfate binding regions lie at residues 92-99 and 123-131; these read KKQFGAEC and KRALHNADC. The tract at residues 139-168 is disordered; sequence KPCGKVTKPKPQAESKKKKKEGKKQEKMLD. Residues 147–168 are chondroitin sulfate A binding; sequence PKPQAESKKKKKEGKKQEKMLD.

It belongs to the pleiotrophin family. Interacts with ALK and NEK6. Interacts with PTPRZ1 (via chondroitin sulfate groups); promotes formation of homooligomers; oligomerization impairs tyrosine phosphatase activity. Forms a complex with PTPRZ1 and CTNNB1; this complex inactivates PTPRZ1 protein tyrosine phosphatase activity through PTN interaction and stimulates tyrosine phosphorylation of CTNNB1. Interacts with ITGB3 and ITGA5. Forms a complex with PTPRZ1 and integrin alpha-V/beta-3 (ITGAV:ITGB3) that stimulates endothelial cell migration through ITGB3 'Tyr-773' phosphorylation. Interacts with SDC3 (via heparan sulfate chains); this interaction mediates the neurite outgrowth-promoting signal from PTN to the cytoskeleton of growing neurites; this interaction mediates osteoblast recruitment. Interacts with GPC2 (via heparan sulfate); this interaction promotes neurite outgrowth through binding of PTN with chondroitin sulfate of proteoglycans, thereby releasing PTPRS of chondroitin sulfate proteoglycans (CSPGs) and leading to binding with heparan sulfate of GPC2. In terms of processing, phosphorylated by NEK6.

It is found in the secreted. Functionally, secreted growth factor that mediates its signal through cell-surface proteoglycan and non-proteoglycan receptors. Binds cell-surface proteoglycan receptor via their chondroitin sulfate (CS) groups. Thereby regulates many processes like cell proliferation, cell survival, cell growth, cell differentiation and cell migration in several tissues namely neuron and bone. Also plays a role in synaptic plasticity and learning-related behavior by inhibiting long-term synaptic potentiation. Binds PTPRZ1, leading to neutralization of the negative charges of the CS chains of PTPRZ1, inducing PTPRZ1 clustering, thereby causing the dimerization and inactivation of its phosphatase activity leading to increased tyrosine phosphorylation of each of the PTPRZ1 substrates like ALK, CTNNB1 or AFAP1L2 in order to activate the PI3K-AKT pathway. Through PTPRZ1 binding controls oligodendrocyte precursor cell differentiation by enhancing the phosphorylation of AFAP1L2 in order to activate the PI3K-AKT pathway. Forms a complex with PTPRZ1 and integrin alpha-V/beta-3 (ITGAV:ITGB3) that stimulates endothelial cell migration through SRC dephosphorylation and activation that consequently leads to ITGB3 'Tyr-773' phosphorylation. In adult hippocampus promotes dendritic arborization, spine development, and functional integration and connectivity of newborn granule neurons through ALK by activating AKT signaling pathway. Binds GPC2 and chondroitin sulfate proteoglycans (CSPGs) at the neuron surface, leading to abrogation of binding between PTPRS and CSPGs and neurite outgrowth promotion. Binds SDC3 and mediates bone formation by recruiting and attaching osteoblasts/osteoblast precursors to the sites for new bone deposition. Binds ALK and promotes cell survival and cell proliferation through MAPK pathway activation. Inhibits proliferation and enhances differentiation of neural stem cells by inhibiting FGF2-induced fibroblast growth factor receptor signaling pathway. Mediates regulatory mechanisms in normal hemostasis and in hematopoietic regeneration and in maintaining the balance of myeloid and lymphoid regeneration. In addition may play a role in the female reproductive system, auditory response and the progesterone-induced decidualization pathway. The polypeptide is Pleiotrophin (Sus scrofa (Pig)).